We begin with the raw amino-acid sequence, 456 residues long: MNTVRETIAAIATAQGRGGVGIVRLSGPLAGKAGQLITGRTLTPRHAHYGPFRDDDGLVLDEGIALFFPGPNSFTGEDVLELQGHGGPVVLDMLLQRCVQVGCRLARPGEFSERAFLNDKLDLAQAEAIADLIEASSSQAARNALRSLQGEFSKRVHSLTEALIALRIYVEAAIDFPEEEIDFLADGHVLSMLDAVRGELSTVQREAGQGALLRDGMTVVIAGRPNAGKSSLLNQLAGREAAIVTDIAGTTRDILREHIHIDGMPLHVVDTAGLRDTDDHVEKIGVERALKAIGEADRVLLVVDSTAPEASDPFALWPEFLDQRPDPAKVTLIRNKADLSGEHVGLEQCDDGHVTITLSAKGDDTGLQLLRDHLKACMGYEQTAESGFSARRRHLDALRQASEHLEHGRAQLTLAGAGELLAEDLRQAQHALGEITGAFSSDDLLGRIFSSFCIGK.

The (6S)-5-formyl-5,6,7,8-tetrahydrofolate site is built by Arg24, Glu81, and Lys120. The region spanning 216–379 (GMTVVIAGRP…LRDHLKACMG (164 aa)) is the TrmE-type G domain. Residue Asn226 coordinates K(+). GTP is bound by residues 226 to 231 (NAGKSS), 245 to 251 (TDIAGTT), 270 to 273 (DTAG), and 335 to 338 (NKAD). Mg(2+) is bound at residue Ser230. K(+) is bound by residues Thr245, Ile247, and Thr250. A Mg(2+)-binding site is contributed by Thr251. Lys456 provides a ligand contact to (6S)-5-formyl-5,6,7,8-tetrahydrofolate.

The protein belongs to the TRAFAC class TrmE-Era-EngA-EngB-Septin-like GTPase superfamily. TrmE GTPase family. As to quaternary structure, homodimer. Heterotetramer of two MnmE and two MnmG subunits. K(+) is required as a cofactor.

It is found in the cytoplasm. Exhibits a very high intrinsic GTPase hydrolysis rate. Involved in the addition of a carboxymethylaminomethyl (cmnm) group at the wobble position (U34) of certain tRNAs, forming tRNA-cmnm(5)s(2)U34. The protein is tRNA modification GTPase MnmE of Pseudomonas putida (strain GB-1).